Consider the following 21-residue polypeptide: Serine protease inhibitor 1 (21 aa).

The Pacifastin domain occupies 1 to 21 (EQQCTPGQTKKEDCNNCTSGD). Residues 1-21 (EQQCTPGQTKKEDCNNCTSGD) are disordered.

The protein belongs to the protease inhibitor I19 family. In terms of tissue distribution, expressed in hemolymph.

The protein resides in the secreted. Probable serine protease inhibitor. The sequence is that of Serine protease inhibitor 1 from Melanoplus sanguinipes (Migratory grasshopper).